A 369-amino-acid chain; its full sequence is Prenyltransferase malB (369 aa).

Glu87 lines the substrate pocket. Dimethylallyl diphosphate-binding residues include Arg100 and Tyr189. Substrate is bound at residue Tyr191.

Belongs to the tryptophan dimethylallyltransferase family.

In terms of biological role, prenyltransferase; part of the gene cluster that mediates the biosynthesis of malbrancheamide, a dichlorinated fungal indole alkaloid that belongs to a family of natural products containing a characteristic bicyclo[2.2.2]diazaoctane core. The first step of malbrancheamide biosynthesis involves coupling of L-proline and L-tryptophan by malG, a bimodular NRPS, to produce L-Pro-L-Trp aldehyde through reductive offloading. This compound undergoes spontaneous cyclization and dehydration to give a dienamine which is reverse prenylated at C-2 by malE. The other prenyltransferase present in the cluster, malB, displays modest activity, suggesting that may be a redundant gene in the pathway. Subsequently, a [4+2] Diels-Alder cyclo-addition catalyzed by the bifunctional enzyme malC forms the characteristic bicyclo[2.2.2]diazaoctane ring of premalbrancheamid. Finally, the flavin-dependent halogenase malA catalyzes the iterative dichlorination of the indole ring of premalbrancheamide to yield C-9 monochlorinated malbrancheamide B, C-8 monochlorinated isomalbrancheamide B, and dichlorinated malbrancheamide. MalA is also able to brominate premalbrancheamide at C-9 to yield malbrancheamide C, and, to a lesser extend, at C-8 to yield isomalbrancheamide C. Finally, malA can brominate C-9 monochlorinated malbrancheamide B at C-8 to yield malbrancheamide D, or C-8 monochlorinated isomalbrancheamide B at C-9 to produce isomalbrancheamide D. This is Prenyltransferase malB from Malbranchea aurantiaca.